Reading from the N-terminus, the 814-residue chain is Lon protease 1 (814 aa).

Over residues 1–17 (MTDDRDKTNEDPEKIIE) the composition is skewed to basic and acidic residues. Positions 1–28 (MTDDRDKTNEDPEKIIEADFNPEDPDDA) are disordered. The region spanning 49 to 245 (LPIIPLRPRP…KVLVLLKKEL (197 aa)) is the Lon N-terminal domain. An ATP-binding site is contributed by 398–405 (GPPGVGKT). The Lon proteolytic domain occupies 633 to 814 (EDVPGVVTGL…YRDVYQVAFG (182 aa)). Active-site residues include serine 721 and lysine 764.

Belongs to the peptidase S16 family. Homohexamer. Organized in a ring with a central cavity.

It is found in the cytoplasm. The catalysed reaction is Hydrolysis of proteins in presence of ATP.. Functionally, ATP-dependent serine protease that mediates the selective degradation of mutant and abnormal proteins as well as certain short-lived regulatory proteins. Required for cellular homeostasis and for survival from DNA damage and developmental changes induced by stress. Degrades polypeptides processively to yield small peptide fragments that are 5 to 10 amino acids long. Binds to DNA in a double-stranded, site-specific manner. This is Lon protease 1 from Syntrophotalea carbinolica (strain DSM 2380 / NBRC 103641 / GraBd1) (Pelobacter carbinolicus).